The following is a 219-amino-acid chain: Claudin-3 (219 aa).

Residues 1-8 lie on the Cytoplasmic side of the membrane; that stretch reads MSMGLEIT. A helical membrane pass occupies residues 9–29; it reads GTSLAVLGWLCTIVCCALPMW. At 30-80 the chain is on the extracellular side; the sequence is RVSAFIGSSIITAQITWEGLWMNCVVQSTGQMQCKMYDSLLALPQDLQAAR. A helical transmembrane segment spans residues 81–101; the sequence is ALIVVSILLAAFGLLVALVGA. Over 102–115 the chain is Cytoplasmic; sequence QCTNCVQDETAKAK. Residues 116-136 form a helical membrane-spanning segment; that stretch reads ITIVAGVLFLLAALLTLVPVS. The Extracellular portion of the chain corresponds to 137–159; the sequence is WSANTIIRDFYNPLVPEAQKREM. Residues 160-180 traverse the membrane as a helical segment; that stretch reads GAGLYVGWAAAALQLLGGALL. The Cytoplasmic segment spans residues 181 to 219; that stretch reads CCSCPPRDKYAPTKILYSAPRSTGPGTGTGTAYDRKDYV. A Phosphotyrosine modification is found at Tyr197. The residue at position 198 (Ser198) is a Phosphoserine. The interval 218–219 is interactions with TJP1, TJP2 and TJP3; that stretch reads YV.

It belongs to the claudin family. In terms of assembly, can form homo- and heteropolymers with other CLDN. Homopolymers interact with CLDN1 and CLDN2 homopolymers. Interacts in cis (within the same plasma membrane) with CLDN19. Directly interacts with TJP1/ZO-1, TJP2/ZO-2 and TJP3/ZO-3. As to quaternary structure, (Microbial infection) Interacts with Clostridium perfringens enterotoxin CPE; the interaction may disrupt claudin assembly in tight junctions. In terms of tissue distribution, expressed in the lung. Expressed at high levels in the liver and at lower levels, in kidney and testis.

It is found in the cell junction. It localises to the tight junction. The protein localises to the cell membrane. Plays a major role in tight junction-specific obliteration of the intercellular space, through calcium-independent cell-adhesion activity. The chain is Claudin-3 (Cldn3) from Mus musculus (Mouse).